The chain runs to 371 residues: Putative ribonuclease 3 (371 aa).

The RNase III domain maps to 10 to 136 (AKSVKDKYIP…FLGAVCMAVD (127 aa)).

The protein belongs to the IIV-6 142R family.

It catalyses the reaction Endonucleolytic cleavage to 5'-phosphomonoester.. Its function is as follows. Digests double-stranded RNA. The chain is Putative ribonuclease 3 from Frog virus 3 (isolate Goorha) (FV-3).